We begin with the raw amino-acid sequence, 519 residues long: Ubiquitin carboxyl-terminal hydrolase 30 (519 aa).

At 1–52 the chain is on the mitochondrial intermembrane side; it reads MSWAPVSTWSRRTPLAACCSAPELPPAGAWKACAAGSLRIGPQGRCKMMKNW. Residues 53–73 form a helical membrane-spanning segment; that stretch reads GMIGGIAAALAAGIYVLWGPI. Topologically, residues 74-519 are cytoplasmic; the sequence is SDRKKYRKGL…HPEDQRAAEK (446 aa). One can recognise a USP domain in the interval 85–504; that stretch reads PGLLNLGNTC…SAYLLFYERI (420 aa). Cysteine 94 acts as the Nucleophile in catalysis. The interval 379–405 is disordered; sequence SKQPANHLSAAEQETTDGKEGGAQNPT. The active-site Proton acceptor is the histidine 455.

It belongs to the peptidase C19 family.

Its subcellular location is the mitochondrion outer membrane. The catalysed reaction is Thiol-dependent hydrolysis of ester, thioester, amide, peptide and isopeptide bonds formed by the C-terminal Gly of ubiquitin (a 76-residue protein attached to proteins as an intracellular targeting signal).. Deubiquitinating enzyme that acts as a key inhibitor of mitophagy by counteracting the action of parkin (PRKN). The polypeptide is Ubiquitin carboxyl-terminal hydrolase 30 (usp30) (Xenopus tropicalis (Western clawed frog)).